A 240-amino-acid chain; its full sequence is uncharacterized protein (240 aa).

2 disordered regions span residues 125 to 148 and 177 to 240; these read RRLDFSSEDGEEEEENDYIDEDVD and DESN…RKSR. Residues 130-148 are compositionally biased toward acidic residues; the sequence is SSEDGEEEEENDYIDEDVD. The segment covering 192–203 has biased composition (basic and acidic residues); that stretch reads SPRKSHIDHDFV. The span at 204-217 shows a compositional bias: acidic residues; sequence IPEDEMLSEEEEQE. Residue serine 231 is modified to Phosphoserine.

It belongs to the UTP5 family.

The protein localises to the cytoplasm. The protein resides in the nucleus. This is an uncharacterized protein from Schizosaccharomyces pombe (strain 972 / ATCC 24843) (Fission yeast).